The sequence spans 574 residues: FAD-linked oxidoreductase sor8 (574 aa).

The N-terminal stretch at 1–27 is a signal peptide; it reads MYAPPFVRAFGIAVLAVLPSFSSPATA. 7 N-linked (GlcNAc...) asparagine glycosylation sites follow: Asn-58, Asn-112, Asn-136, Asn-266, Asn-312, Asn-363, and Asn-384. The 180-residue stretch at 126–305 folds into the FAD-binding PCMH-type domain; that stretch reads VIGTYVQYAV…YSMTVKAHAN (180 aa).

This sequence belongs to the oxygen-dependent FAD-linked oxidoreductase family. It depends on FAD as a cofactor.

It functions in the pathway secondary metabolite biosynthesis. In terms of biological role, FAD-linked oxidoreductase; part of the SOR gene cluster that mediates the biosynthesis of sorbicillinoids, a diverse group of yellow secondary metabolites that restrict growth of competing pathogenic fungi but not of bacteria. Sorbicillinoids biosynthesis requires the action of two PKSs. The SOR cluster is required for the production of trichodimerol and dihydrotrichotetronin, with sor2 being sufficient for production of trichodimerol, but not dihydrotrichotetronin in the light. Sor1 iteratively combines three acetyl units and the growing chain is modified by the ketoacyl reductase subunit, and optional by the enoyl reductase subunit in the second cycle. The polyketide is then handed over to the PKS sor2, which adds three more acetyl units, and two methyl groups. Sor2 releases an aldehyde, which undergoes spontaneous cyclization resulting in the formation of sorbicillin or 2',3'-dihydrosorbicillin. The monooxygenase sor5 oxidizes sorbicillin and 2',3'-dihydrosorbicillin to 2',3'-dihydrosorbicillinol and sorbicillinol, respectively. The oxidoreductase sor8 further converts sorbicillinol into oxosorbicillinol. Sorbicillinol is the building block for the other sorbicillinoids such as disorbicillinol, bisvertinolon, dihydrobisvertinolone, and dihydrotrichotetronine. The protein is FAD-linked oxidoreductase sor8 of Hypocrea jecorina (strain QM6a) (Trichoderma reesei).